We begin with the raw amino-acid sequence, 72 residues long: Translation initiation factor IF-1 (72 aa).

Residues 1 to 72 (MSKNDVIEVE…TRGRIVYRFK (72 aa)) enclose the S1-like domain.

This sequence belongs to the IF-1 family. As to quaternary structure, component of the 30S ribosomal translation pre-initiation complex which assembles on the 30S ribosome in the order IF-2 and IF-3, IF-1 and N-formylmethionyl-tRNA(fMet); mRNA recruitment can occur at any time during PIC assembly.

It is found in the cytoplasm. Its function is as follows. One of the essential components for the initiation of protein synthesis. Stabilizes the binding of IF-2 and IF-3 on the 30S subunit to which N-formylmethionyl-tRNA(fMet) subsequently binds. Helps modulate mRNA selection, yielding the 30S pre-initiation complex (PIC). Upon addition of the 50S ribosomal subunit IF-1, IF-2 and IF-3 are released leaving the mature 70S translation initiation complex. The protein is Translation initiation factor IF-1 of Desulforamulus reducens (strain ATCC BAA-1160 / DSM 100696 / MI-1) (Desulfotomaculum reducens).